The chain runs to 211 residues: MARSKSSNRWLEEHFSDQYVKKSHADGYRTRASYKLLELNDKDRLIRPGMLVVDLGAAPGGWSQVAGQQVGTHGRVVASDILPMDTLEGVEFIQGDFTDDSVFNQILLAIGDTPVDLVISDMAPNMSGINAVDQPQAMYLVELALDMAKRVLKPQGNFVAKVFHGEGYDQYLKDLKGCFEKVVIRKPDASRSRSREVYVVGKGFLGCQTVS.

5 residues coordinate S-adenosyl-L-methionine: glycine 60, tryptophan 62, aspartate 80, aspartate 96, and aspartate 121. Residue lysine 161 is the Proton acceptor of the active site.

Belongs to the class I-like SAM-binding methyltransferase superfamily. RNA methyltransferase RlmE family.

The protein resides in the cytoplasm. It carries out the reaction uridine(2552) in 23S rRNA + S-adenosyl-L-methionine = 2'-O-methyluridine(2552) in 23S rRNA + S-adenosyl-L-homocysteine + H(+). Its function is as follows. Specifically methylates the uridine in position 2552 of 23S rRNA at the 2'-O position of the ribose in the fully assembled 50S ribosomal subunit. This Cellvibrio japonicus (strain Ueda107) (Pseudomonas fluorescens subsp. cellulosa) protein is Ribosomal RNA large subunit methyltransferase E.